A 137-amino-acid chain; its full sequence is NADPH-dependent 7-cyano-7-deazaguanine reductase (137 aa).

Cysteine 50 (thioimide intermediate) is an active-site residue. Residue aspartate 57 is the Proton donor of the active site. Residues 72 to 74 and 91 to 92 contribute to the substrate site; these read VEL and HE.

The protein belongs to the GTP cyclohydrolase I family. QueF type 1 subfamily.

The protein resides in the cytoplasm. It catalyses the reaction 7-aminomethyl-7-carbaguanine + 2 NADP(+) = 7-cyano-7-deazaguanine + 2 NADPH + 3 H(+). It participates in tRNA modification; tRNA-queuosine biosynthesis. Functionally, catalyzes the NADPH-dependent reduction of 7-cyano-7-deazaguanine (preQ0) to 7-aminomethyl-7-deazaguanine (preQ1). The chain is NADPH-dependent 7-cyano-7-deazaguanine reductase from Synechococcus sp. (strain CC9902).